A 364-amino-acid polypeptide reads, in one-letter code: Probable endopolygalacturonase B (364 aa).

An N-terminal signal peptide occupies residues 1-20; it reads MHFFQSSLVAATMGAALVAA. Positions 21–29 are excised as a propeptide; sequence APAADLETR. Cys-32 and Cys-47 are oxidised to a cystine. N-linked (GlcNAc...) asparagine glycosylation is found at Asn-138 and Asn-141. PbH1 repeat units lie at residues 159-188, 189-210, 211-231, 240-261, 269-291, and 303-324; these read SDHLTIKDVLLDNSAGTKLGHNTDAFDVGS, STYITIDGATVYNQDDCLAVNS, GEHITFTNGYCNGGHGLSIGS, VNDVTISNSQVINSQNGARIKT, VTGVKFQDISLKGITKYGIVVQQ, and TNGVKVSDITFEKVTGTVTSSA. The active-site Proton donor is Asp-203. A disulfide bond links Cys-205 and Cys-221. His-225 is an active-site residue. Cys-331 and Cys-336 are disulfide-bonded. Residue Asn-338 is glycosylated (N-linked (GlcNAc...) asparagine). A disulfide bridge connects residues Cys-355 and Cys-364.

The protein belongs to the glycosyl hydrolase 28 family.

Its subcellular location is the secreted. It carries out the reaction (1,4-alpha-D-galacturonosyl)n+m + H2O = (1,4-alpha-D-galacturonosyl)n + (1,4-alpha-D-galacturonosyl)m.. Functionally, involved in maceration and soft-rotting of plant tissue. Hydrolyzes the 1,4-alpha glycosidic bonds of de-esterified pectate in the smooth region of the plant cell wall. The protein is Probable endopolygalacturonase B (pgaB) of Aspergillus fumigatus (strain ATCC MYA-4609 / CBS 101355 / FGSC A1100 / Af293) (Neosartorya fumigata).